The sequence spans 542 residues: CTP synthase (542 aa).

The amidoligase domain stretch occupies residues 1 to 265 (MTRYIFVTGG…DEIIVERFGL (265 aa)). Residue S13 coordinates CTP. S13 contacts UTP. ATP is bound by residues 14 to 19 (SLGKGI) and D71. Mg(2+) is bound by residues D71 and E139. Residues 146 to 148 (DIE), 186 to 191 (KTKPTQ), and K222 contribute to the CTP site. UTP-binding positions include 186–191 (KTKPTQ) and K222. One can recognise a Glutamine amidotransferase type-1 domain in the interval 290 to 541 (TIAMVGKYME…VRAALENAGG (252 aa)). An L-glutamine-binding site is contributed by G351. C378 acts as the Nucleophile; for glutamine hydrolysis in catalysis. L-glutamine is bound by residues 379-382 (LGLQ), E402, and R469. Catalysis depends on residues H514 and E516.

This sequence belongs to the CTP synthase family. In terms of assembly, homotetramer.

It carries out the reaction UTP + L-glutamine + ATP + H2O = CTP + L-glutamate + ADP + phosphate + 2 H(+). The enzyme catalyses L-glutamine + H2O = L-glutamate + NH4(+). The catalysed reaction is UTP + NH4(+) + ATP = CTP + ADP + phosphate + 2 H(+). The protein operates within pyrimidine metabolism; CTP biosynthesis via de novo pathway; CTP from UDP: step 2/2. Its activity is regulated as follows. Allosterically activated by GTP, when glutamine is the substrate; GTP has no effect on the reaction when ammonia is the substrate. The allosteric effector GTP functions by stabilizing the protein conformation that binds the tetrahedral intermediate(s) formed during glutamine hydrolysis. Inhibited by the product CTP, via allosteric rather than competitive inhibition. Catalyzes the ATP-dependent amination of UTP to CTP with either L-glutamine or ammonia as the source of nitrogen. Regulates intracellular CTP levels through interactions with the four ribonucleotide triphosphates. The sequence is that of CTP synthase from Hahella chejuensis (strain KCTC 2396).